The sequence spans 137 residues: MRTLGVDLGRVRIGLAVADEILRTARAVTTVVRRTEAEDLSAIAEVARDYEVTRAVVGLPLNMDGTEGPSARLARGFAPRLEAALGVPVELFDERLSSFEAESRLRARGLSAREQRGQVDAEAAAVILQGWLDRRAP.

The protein belongs to the YqgF nuclease family.

The protein resides in the cytoplasm. Its function is as follows. Could be a nuclease involved in processing of the 5'-end of pre-16S rRNA. The protein is Putative pre-16S rRNA nuclease of Anaeromyxobacter sp. (strain K).